The chain runs to 358 residues: MIGFAPISAPDALAEAAARARQDALTKPRGALGRLEDLSAWVASCQGQCPPRQFQRARVVVFAGDHGVTRSGVSAYPPDVTAQMVANIDGGGAAINALADVAGATVRVVDLAVDAEALSEQIGAHKVRRGSGDIATEDALTDDQTAAAIAAGQQIADAEVDAGADLLIAGDMGIGNTTPAAVLVAALTNTEPVAVVGFGTGVDDATWSRKTAAVRDALFRSARVLPDPVALLRCCGGADLAAMAGFCAQAAVRRTPLLLDGMAVTAAALVAERLAPGARQWWQAGHRSTEPGHQLALTALALDPVVDLRMRLGEGTGATVALPVLRAAVAALSSMATFAEAGVSTACDDAGATEPPES.

Residue glutamate 314 is the Proton acceptor of the active site.

It belongs to the CobT family.

The enzyme catalyses 5,6-dimethylbenzimidazole + nicotinate beta-D-ribonucleotide = alpha-ribazole 5'-phosphate + nicotinate + H(+). It participates in nucleoside biosynthesis; alpha-ribazole biosynthesis; alpha-ribazole from 5,6-dimethylbenzimidazole: step 1/2. Functionally, catalyzes the synthesis of alpha-ribazole-5'-phosphate from nicotinate mononucleotide (NAMN) and 5,6-dimethylbenzimidazole (DMB). This is Nicotinate-nucleotide--dimethylbenzimidazole phosphoribosyltransferase from Mycobacterium marinum (strain ATCC BAA-535 / M).